Reading from the N-terminus, the 408-residue chain is Protein ZNF365 (408 aa).

Position 16 is a phosphoserine (Ser-16). The segment at 26-51 adopts a C2H2-type; degenerate zinc-finger fold; that stretch reads FRCPRCGDHTRFRSLSSLRAHLEFSH. A phosphoserine mark is found at Ser-139 and Ser-146. Positions 170-298 form a coiled coil; sequence VEAVDRTIEK…QLEYYQSQQA (129 aa). At Thr-176 the chain carries Phosphothreonine. Position 370 is a phosphoserine (Ser-370).

Homodimer. Interacts with NDE1 and NDEL1. Interacts with DISC1. Interacts with PARP1. Interacts with MCRS1. Detected in several tissues, with highest levels in brain. Also expressed during embryonic development. Expressed in cerebral cortex, hippocampus, striatum, inferior colliculus and thalamus.

Its subcellular location is the cytoplasm. It localises to the cytoskeleton. It is found in the microtubule organizing center. The protein resides in the centrosome. Contributes to genomic stability by preventing telomere dysfunction. Involved in the morphogenesis of basket cells in the somatosensory cortex during embryogenesis. Involved in the positive regulation of oligodendrocyte differentiation during postnatal growth. Involved in dendritic arborization, morphogenesis of spine density dendrite, and establishment of postsynaptic dendrite density in cortical pyramidal neurons. Involved in the regulation of neurogenesis. Negatively regulates neurite outgrowth. Involved in homologous recombination (HR) repair pathway. Required for proper resolution of DNA double-strand breaks (DSBs) by HR. Is required for recovery of stalled replication forks, and directly contributes to genomic stability. Interacts with PARP1 and mediates MRE11-dependent DNA end resection during replication fork recovery. The polypeptide is Protein ZNF365 (Znf365) (Mus musculus (Mouse)).